Here is a 262-residue protein sequence, read N- to C-terminus: Ribosomal RNA small subunit methyltransferase A (262 aa).

Positions 16, 18, 43, 64, 89, and 109 each coordinate S-adenosyl-L-methionine.

It belongs to the class I-like SAM-binding methyltransferase superfamily. rRNA adenine N(6)-methyltransferase family. RsmA subfamily.

The protein localises to the cytoplasm. The enzyme catalyses adenosine(1518)/adenosine(1519) in 16S rRNA + 4 S-adenosyl-L-methionine = N(6)-dimethyladenosine(1518)/N(6)-dimethyladenosine(1519) in 16S rRNA + 4 S-adenosyl-L-homocysteine + 4 H(+). Specifically dimethylates two adjacent adenosines (A1518 and A1519) in the loop of a conserved hairpin near the 3'-end of 16S rRNA in the 30S particle. May play a critical role in biogenesis of 30S subunits. The polypeptide is Ribosomal RNA small subunit methyltransferase A (Xanthomonas campestris pv. campestris (strain 8004)).